Consider the following 385-residue polypeptide: 1-deoxy-D-xylulose 5-phosphate reductoisomerase (385 aa).

The NADPH site is built by threonine 11, glycine 12, serine 13, isoleucine 14, asparagine 39, and asparagine 123. 1-deoxy-D-xylulose 5-phosphate is bound at residue lysine 124. Glutamate 125 serves as a coordination point for NADPH. Aspartate 149 contacts Mn(2+). Positions 150, 151, 174, and 197 each coordinate 1-deoxy-D-xylulose 5-phosphate. Glutamate 151 is a binding site for Mn(2+). Position 203 (glycine 203) interacts with NADPH. Residues serine 210, asparagine 215, lysine 216, and glutamate 219 each contribute to the 1-deoxy-D-xylulose 5-phosphate site. Position 219 (glutamate 219) interacts with Mn(2+).

The protein belongs to the DXR family. It depends on Mg(2+) as a cofactor. The cofactor is Mn(2+).

It catalyses the reaction 2-C-methyl-D-erythritol 4-phosphate + NADP(+) = 1-deoxy-D-xylulose 5-phosphate + NADPH + H(+). Its pathway is isoprenoid biosynthesis; isopentenyl diphosphate biosynthesis via DXP pathway; isopentenyl diphosphate from 1-deoxy-D-xylulose 5-phosphate: step 1/6. Catalyzes the NADPH-dependent rearrangement and reduction of 1-deoxy-D-xylulose-5-phosphate (DXP) to 2-C-methyl-D-erythritol 4-phosphate (MEP). The protein is 1-deoxy-D-xylulose 5-phosphate reductoisomerase of Porphyromonas gingivalis (strain ATCC 33277 / DSM 20709 / CIP 103683 / JCM 12257 / NCTC 11834 / 2561).